We begin with the raw amino-acid sequence, 642 residues long: Threonine--tRNA ligase (642 aa).

Positions 1-61 constitute a TGS domain; that stretch reads MPVITLPDGS…ENDATLAIIT (61 aa). A catalytic region spans residues 243 to 534; the sequence is DHRKIGKQLD…LTEEFAGFFP (292 aa). The Zn(2+) site is built by Cys-334, His-385, and His-511.

This sequence belongs to the class-II aminoacyl-tRNA synthetase family. As to quaternary structure, homodimer. The cofactor is Zn(2+).

It is found in the cytoplasm. The catalysed reaction is tRNA(Thr) + L-threonine + ATP = L-threonyl-tRNA(Thr) + AMP + diphosphate + H(+). Its function is as follows. Catalyzes the attachment of threonine to tRNA(Thr) in a two-step reaction: L-threonine is first activated by ATP to form Thr-AMP and then transferred to the acceptor end of tRNA(Thr). Also edits incorrectly charged L-seryl-tRNA(Thr). This Salmonella gallinarum (strain 287/91 / NCTC 13346) protein is Threonine--tRNA ligase.